We begin with the raw amino-acid sequence, 80 residues long: uncharacterized protein (80 aa).

This is an uncharacterized protein from Shigella flexneri.